We begin with the raw amino-acid sequence, 506 residues long: Maturase K (506 aa).

Belongs to the intron maturase 2 family. MatK subfamily.

It localises to the plastid. The protein resides in the chloroplast. Its function is as follows. Usually encoded in the trnK tRNA gene intron. Probably assists in splicing its own and other chloroplast group II introns. In Arctostaphylos uva-ursi (Bearberry), this protein is Maturase K.